The sequence spans 372 residues: Aminomethyltransferase (372 aa).

The protein belongs to the GcvT family. In terms of assembly, the glycine cleavage system is composed of four proteins: P, T, L and H.

The catalysed reaction is N(6)-[(R)-S(8)-aminomethyldihydrolipoyl]-L-lysyl-[protein] + (6S)-5,6,7,8-tetrahydrofolate = N(6)-[(R)-dihydrolipoyl]-L-lysyl-[protein] + (6R)-5,10-methylene-5,6,7,8-tetrahydrofolate + NH4(+). The glycine cleavage system catalyzes the degradation of glycine. The polypeptide is Aminomethyltransferase (Burkholderia cenocepacia (strain ATCC BAA-245 / DSM 16553 / LMG 16656 / NCTC 13227 / J2315 / CF5610) (Burkholderia cepacia (strain J2315))).